We begin with the raw amino-acid sequence, 266 residues long: MQVIILPSAHDVALYAAARVIDVINTETNPVLGLATGSTPIALYKELVVLYQSKQVSFRHTTSFNLDEYIGIADSHEQSYRTFMNRHLFDAIDIIATNTHVPLAESQDAGTLKNSAQDYEASIQQAGGIDLQILGIGVNGHIGFNEPTSSFASRTRIKTLSESTVVANKRFFKDGEFQPHLALTMGIGTILDSRAVLLMATGKAKAEAVKAMIEGSLSAMCPASALQLHEAATIVLDEEAASLLALKEYYQWCEQKRQQLHEGDVS.

Catalysis depends on Asp67, which acts as the Proton acceptor; for enolization step. Asn139 functions as the For ring-opening step in the catalytic mechanism. The active-site Proton acceptor; for ring-opening step is the His141. Residue Glu146 is the For ring-opening step of the active site.

The protein belongs to the glucosamine/galactosamine-6-phosphate isomerase family. NagB subfamily. As to quaternary structure, homohexamer.

It carries out the reaction alpha-D-glucosamine 6-phosphate + H2O = beta-D-fructose 6-phosphate + NH4(+). It participates in amino-sugar metabolism; N-acetylneuraminate degradation; D-fructose 6-phosphate from N-acetylneuraminate: step 5/5. Catalyzes the reversible isomerization-deamination of glucosamine 6-phosphate (GlcN6P) to form fructose 6-phosphate (Fru6P) and ammonium ion. This Marinomonas sp. (strain MWYL1) protein is Glucosamine-6-phosphate deaminase.